The chain runs to 251 residues: Phosphate import ATP-binding protein PstB 2 (251 aa).

The ABC transporter domain maps to 5–246; the sequence is ITTKDVHLYY…PDKEQTADYL (242 aa). ATP is bound at residue 37–44; it reads GPSGCGKS.

This sequence belongs to the ABC transporter superfamily. Phosphate importer (TC 3.A.1.7) family. In terms of assembly, the complex is composed of two ATP-binding proteins (PstB), two transmembrane proteins (PstC and PstA) and a solute-binding protein (PstS).

Its subcellular location is the cell membrane. It catalyses the reaction phosphate(out) + ATP + H2O = ADP + 2 phosphate(in) + H(+). Functionally, part of the ABC transporter complex PstSACB involved in phosphate import. Responsible for energy coupling to the transport system. This is Phosphate import ATP-binding protein PstB 2 from Ligilactobacillus salivarius (strain UCC118) (Lactobacillus salivarius).